A 521-amino-acid chain; its full sequence is Probable ATP-dependent RNA helicase Dbp45A (521 aa).

The Q motif signature appears at 7–35; it reads NPFQILGLRPWLVKQLTKLGLKGATPIQQ. The Helicase ATP-binding domain occupies 38–209; the sequence is IPAILAGQDC…IFPIASDCFE (172 aa). 51–58 is a binding site for ATP; the sequence is AKTGSGKT. The short motif at 157–160 is the DEAD box element; the sequence is DEAD. A Helicase C-terminal domain is found at 237–386; that stretch reads VLIEALRKYR…EHPIDQRMVE (150 aa). Positions 448–521 are disordered; the sequence is KRKLQHAEPA…GRADVKKDKA (74 aa). Composition is skewed to basic and acidic residues over residues 460 to 482 and 502 to 521; these read EEGK…FEKK and LNKE…KDKA.

Belongs to the DEAD box helicase family. DDX49/DBP8 subfamily.

The enzyme catalyses ATP + H2O = ADP + phosphate + H(+). Its function is as follows. Probable ATP-binding RNA helicase. This chain is Probable ATP-dependent RNA helicase Dbp45A (Dbp45A), found in Drosophila melanogaster (Fruit fly).